Here is a 454-residue protein sequence, read N- to C-terminus: MQLKIKEIFDQDYTKLEGQKVQIKAWVRSNRDSKKIGFLVLNDGSSLTNLQAVYRVDKISNYEEITAARMWAAVAIEGVIKLTPTAKQPLELEVLNAQILKQSDEDFLLSNNDLSLETLRLNAHLRPRTNLFHAIMKVRATLAFAVHEFMNQNEYSWLAAPLFTGNDAEGAGETFSIQKFDNEEFFGKQTHLSVTGQLQAEAYAQAFGNVYTFGPTFRAEKSHTNRHLAEFWMIEPEMAFVDLKGMQDIVENLIKHVIKAVLEKNQQELEFLAQRNDENLIKKLQKVVDSKFERIEYKDAVKILANAVKSGHQFEDNEIFFGMDLGSEHERYMCETYHQGPVFLQNYPKDIKAFYMKLNDDQQTVASTDLLIPGVGELVGGSQREDNYEKLLKRCQELKMPIESLQWYLDLRRFGYYMSSGFGIGFERLVMYVTGVNNIKDTIPFPRSHGQIEF.

The protein belongs to the class-II aminoacyl-tRNA synthetase family. As to quaternary structure, homodimer.

Its subcellular location is the cytoplasm. The catalysed reaction is tRNA(Asn) + L-asparagine + ATP = L-asparaginyl-tRNA(Asn) + AMP + diphosphate + H(+). This chain is Asparagine--tRNA ligase, found in Ureaplasma urealyticum serovar 10 (strain ATCC 33699 / Western).